We begin with the raw amino-acid sequence, 849 residues long: Coiled-coil domain-containing protein 87 (849 aa).

Positions 387 to 415 form a coiled coil; the sequence is RHPAAGHRLEELEKMLRNLQEEEASGQWD.

Belongs to the CCDC87 family.

Its function is as follows. Plays a role in spermatogenesis, where it is important for normal sperm head morphology. Also required for the acrosome reaction and thus normal male fertility. The sequence is that of Coiled-coil domain-containing protein 87 (CCDC87) from Homo sapiens (Human).